A 354-amino-acid polypeptide reads, in one-letter code: N-acylethanolamine-hydrolyzing acid amidase (354 aa).

An N-terminal signal peptide occupies residues Met1–Pro22. N-linked (GlcNAc...) asparagine glycans are attached at residues Asn35 and Asn104. The Nucleophile role is filled by Cys123. Asn306, Asn312, and Asn352 each carry an N-linked (GlcNAc...) asparagine glycan.

The protein belongs to the acid ceramidase family. As to quaternary structure, heterodimer of an alpha and a beta subunit, produced by autocatalytic cleavage. N-glycosylated. Tunicamycin treatment causes a reduction in specific activity against N-palmitoylethanolamine. Post-translationally, autoproteolytic cleavage at pH 4.5 gives rise to the alpha and beta subunit. Cleavage gives rise to a conformation change that activates the enzyme. The same catalytic Cys residue mediates the autoproteolytic cleavage and subsequent hydrolysis of lipid substrates.

The protein resides in the lysosome. Its subcellular location is the membrane. The catalysed reaction is N-hexadecanoylethanolamine + H2O = ethanolamine + hexadecanoate. It catalyses the reaction an N-(long-chain fatty acyl)ethanolamine + H2O = a long-chain fatty acid + ethanolamine. It carries out the reaction N-dodecanoylethanolamine + H2O = dodecanoate + ethanolamine. The enzyme catalyses N-tetradecanoylethanolamine + H2O = tetradecanoate + ethanolamine. The catalysed reaction is an N-acylsphing-4-enine + H2O = sphing-4-enine + a fatty acid. It catalyses the reaction N-hexadecanoylsphing-4-enine + H2O = sphing-4-enine + hexadecanoate. It carries out the reaction N-dodecanoylsphing-4-enine + H2O = dodecanoate + sphing-4-enine. The protein operates within lipid metabolism; fatty acid metabolism. Functionally, degrades bioactive fatty acid amides to their corresponding acids, with the following preference: N-palmitoylethanolamine &gt; N-myristoylethanolamine &gt; N-stearoylethanolamine &gt; N-oleoylethanolamine &gt; N-linoleoylethanolamine &gt; N-arachidonoylethanolamine. The polypeptide is N-acylethanolamine-hydrolyzing acid amidase (Cavia porcellus (Guinea pig)).